Here is a 331-residue protein sequence, read N- to C-terminus: Ferrochelatase (331 aa).

Fe cation-binding residues include His187 and Glu286.

The protein belongs to the ferrochelatase family.

The protein localises to the cytoplasm. The catalysed reaction is heme b + 2 H(+) = protoporphyrin IX + Fe(2+). The protein operates within porphyrin-containing compound metabolism; protoheme biosynthesis; protoheme from protoporphyrin-IX: step 1/1. Functionally, catalyzes the ferrous insertion into protoporphyrin IX. This chain is Ferrochelatase, found in Legionella pneumophila (strain Paris).